A 518-amino-acid chain; its full sequence is Phenylacetate 2-hydroxylase (518 aa).

Residue Cys437 participates in heme binding.

It belongs to the cytochrome P450 family.

The catalysed reaction is 2-phenylacetate + reduced [NADPH--hemoprotein reductase] + O2 = (2-hydroxyphenyl)acetate + oxidized [NADPH--hemoprotein reductase] + H2O + H(+). Its pathway is aromatic compound metabolism; phenylacetate degradation. Functionally, catalyzes the hydroxylation of phenylacetate to 2-hydroxyphenylacetate in the homogentisate pathway. The homogentisate pathway is used to catabolize phenylacetate and use it as a carbon source. Can also catalyze the hydroxylation of 3-hydroxyphenylacetate to 2,5-dihydroxyphenylacetate (homogentisate) at low efficiency. The polypeptide is Phenylacetate 2-hydroxylase (phacA) (Emericella nidulans (Aspergillus nidulans)).